The chain runs to 380 residues: Erythronate-4-phosphate dehydrogenase (380 aa).

Substrate is bound by residues S45 and T66. Residues D146, T174, 205–207, and D231 each bind NAD(+); that span reads ASR. R207 is an active-site residue. The active site involves E236. The active-site Proton donor is the H253. G256 provides a ligand contact to NAD(+). Residue Y257 participates in substrate binding.

Belongs to the D-isomer specific 2-hydroxyacid dehydrogenase family. PdxB subfamily. In terms of assembly, homodimer.

The protein resides in the cytoplasm. The enzyme catalyses 4-phospho-D-erythronate + NAD(+) = (R)-3-hydroxy-2-oxo-4-phosphooxybutanoate + NADH + H(+). It participates in cofactor biosynthesis; pyridoxine 5'-phosphate biosynthesis; pyridoxine 5'-phosphate from D-erythrose 4-phosphate: step 2/5. Catalyzes the oxidation of erythronate-4-phosphate to 3-hydroxy-2-oxo-4-phosphonooxybutanoate. In Pseudomonas putida (strain GB-1), this protein is Erythronate-4-phosphate dehydrogenase.